The following is a 581-amino-acid chain: Leucine-rich repeat-containing protein 15 (581 aa).

The first 21 residues, 1-21 (MPLKHYLLLLVGCQAWGAGLA), serve as a signal peptide directing secretion. The LRRNT domain occupies 22–53 (YHGCPSECTCSRASQVECTGARIVAVPTPLPW). Topologically, residues 22–538 (YHGCPSECTC…VWGMTQAQSG (517 aa)) are extracellular. LRR repeat units follow at residues 54-75 (NAMS…PFLN), 78-99 (ALIA…AFRN), 102-123 (SLRY…LFQG), 126-147 (SLES…HFSQ), 150-171 (NLKE…AFDH), 174-195 (GLTK…VFQH), 198-219 (NLQV…TFDG), 222-243 (NLQE…LFHN), 246-267 (NLQR…VFMQ), 270-291 (QLNR…IFGP), 294-315 (NLRE…VFSN), 318-339 (QLQV…AFNG), 342-363 (ELRE…VFRM), 366-387 (NLQN…IFAN), and 390-411 (GLMA…IFDH). A glycan (N-linked (GlcNAc...) asparagine) is linked at Asn-75. N-linked (GlcNAc...) asparagine glycosylation occurs at Asn-369. Residues 423 to 475 (NPWRCDSDILPLRNWLLLNQPRLGTDTVPVCFSPANVRGQSLIIINVNVAVPS) form the LRRCT domain. Residues 489–509 (WYPDTPSYPDTTSVSSTTELT) are disordered. Over residues 499 to 509 (TTSVSSTTELT) the composition is skewed to low complexity. A helical membrane pass occupies residues 539–559 (LAIAAIVIGIVALACSLAACV). Topologically, residues 560–581 (GCCCCKKRSQAVLMQMKAPNEC) are cytoplasmic.

In terms of assembly, (Microbial infection) Interacts with human coronavirus SARS-CoV-2 spike protein (via RBD domain); the interaction is direct and sequesters virions at the cell surface. As to quaternary structure, (Microbial infection) Interacts with human coronavirus SARS-CoV-2 spike protein (via RBD domain); the interaction is direct. In terms of tissue distribution, expressed in brain and placenta. Expressed in lung fibroblasts. Expressed in chodrocytes.

The protein localises to the cell membrane. In terms of biological role, (Microbial infection) Modulates the ability of SARS-CoV-2 to infect host cells through interaction with the spike protein. Does not act as a SARS-CoV-2 entry receptor but sequesters virions and antagonizes in trans SARS-CoV-2 infection of ACE2(+) cells when expressed on nearby cells. The chain is Leucine-rich repeat-containing protein 15 (LRRC15) from Homo sapiens (Human).